Reading from the N-terminus, the 281-residue chain is MAFSDLTSRTVRFYDNWIKDADPRVENWLLMSSPLPQTIILGLYVYFVTSLGPKLMENRKPFELKKAMITYNFFIVLFSVYMCYEFVMSGWGTGYSFRCDIVDYSQSPRAMRMVHTCWLYYFSKFIELFDTIFFVLRKKNSQVTFLHVFHHTIMPWTWWFGVKFAAGGLGTFHALLNTAVHVVMYFYYGLCAMGPAYQKYLWWKKHLTSLQLVQFVLVTVHIGQIFFMEDCNYQYPVFLYIIMSYGCIFLLLFLHFWYRAYTKGQRLPKTMENGNCKSKHH.

Alanine 2 carries the post-translational modification N-acetylalanine. Residues 2 to 27 (AFSDLTSRTVRFYDNWIKDADPRVEN) are Lumenal-facing. The helical transmembrane segment at 28-48 (WLLMSSPLPQTIILGLYVYFV) threads the bilayer. Residues 49 to 72 (TSLGPKLMENRKPFELKKAMITYN) are Cytoplasmic-facing. A helical membrane pass occupies residues 73–93 (FFIVLFSVYMCYEFVMSGWGT). The Lumenal segment spans residues 94 to 115 (GYSFRCDIVDYSQSPRAMRMVH). Cysteine 99 and cysteine 231 are disulfide-bonded. A helical transmembrane segment spans residues 116–136 (TCWLYYFSKFIELFDTIFFVL). Lysine 124, arginine 137, lysine 139, glutamine 142, and histidine 147 together coordinate 3-oxoeicosanoyl-CoA. Residues 137–142 (RKKNSQ) are Cytoplasmic-facing. Residues 143–162 (VTFLHVFHHTIMPWTWWFGV) traverse the membrane as a helical segment. Residues 147–151 (HVFHH) carry the HxxHH motif motif. The Nucleophile role is filled by histidine 150. Residues 163 to 176 (KFAAGGLGTFHALL) lie on the Lumenal side of the membrane. Residues 177–197 (NTAVHVVMYFYYGLCAMGPAY) form a helical membrane-spanning segment. Positions 187, 204, 208, and 211 each coordinate 3-oxoeicosanoyl-CoA. The Cytoplasmic segment spans residues 198-206 (QKYLWWKKH). Residues 207–227 (LTSLQLVQFVLVTVHIGQIFF) traverse the membrane as a helical segment. Over 228-236 (MEDCNYQYP) the chain is Lumenal. A helical transmembrane segment spans residues 237–257 (VFLYIIMSYGCIFLLLFLHFW). The Cytoplasmic segment spans residues 258 to 281 (YRAYTKGQRLPKTMENGNCKSKHH). Position 266 (arginine 266) interacts with 3-oxoeicosanoyl-CoA. Positions 277 to 281 (KSKHH) match the Di-lysine motif motif.

This sequence belongs to the ELO family. ELOVL7 subfamily. In terms of assembly, homodimer. Interacts with TECR.

Its subcellular location is the endoplasmic reticulum membrane. It catalyses the reaction a very-long-chain acyl-CoA + malonyl-CoA + H(+) = a very-long-chain 3-oxoacyl-CoA + CO2 + CoA. The enzyme catalyses eicosanoyl-CoA + malonyl-CoA + H(+) = 3-oxodocosanoyl-CoA + CO2 + CoA. The catalysed reaction is (5Z,8Z,11Z,14Z)-eicosatetraenoyl-CoA + malonyl-CoA + H(+) = (7Z,10Z,13Z,16Z)-3-oxodocosatetraenoyl-CoA + CO2 + CoA. It carries out the reaction (6Z,9Z,12Z)-octadecatrienoyl-CoA + malonyl-CoA + H(+) = (8Z,11Z,14Z)-3-oxoeicosatrienoyl-CoA + CO2 + CoA. It catalyses the reaction (9Z,12Z)-octadecadienoyl-CoA + malonyl-CoA + H(+) = (11Z,14Z)-3-oxoicosa-11,14-dienoyl-CoA + CO2 + CoA. The enzyme catalyses (9Z)-octadecenoyl-CoA + malonyl-CoA + H(+) = 3-oxo-(11Z)-eicosenoyl-CoA + CO2 + CoA. The catalysed reaction is octadecanoyl-CoA + malonyl-CoA + H(+) = 3-oxoeicosanoyl-CoA + CO2 + CoA. It carries out the reaction hexadecanoyl-CoA + malonyl-CoA + H(+) = 3-oxooctadecanoyl-CoA + CO2 + CoA. It catalyses the reaction (9Z,12Z,15Z)-octadecatrienoyl-CoA + malonyl-CoA + H(+) = (11Z,14Z,17Z)-3-oxoeicosatrienoyl-CoA + CO2 + CoA. It functions in the pathway lipid metabolism; fatty acid biosynthesis. Catalyzes the first and rate-limiting reaction of the four reactions that constitute the long-chain fatty acids elongation cycle. This endoplasmic reticulum-bound enzymatic process allows the addition of 2 carbons to the chain of long- and very long-chain fatty acids (VLCFAs) per cycle. Condensing enzyme with higher activity toward C18 acyl-CoAs, especially C18:3(n-3) acyl-CoAs and C18:3(n-6)-CoAs. Also active toward C20:4-, C18:0-, C18:1-, C18:2- and C16:0-CoAs, and weakly toward C20:0-CoA. Little or no activity toward C22:0-, C24:0-, or C26:0-CoAs. May participate in the production of saturated and polyunsaturated VLCFAs of different chain lengths that are involved in multiple biological processes as precursors of membrane lipids and lipid mediators. This is Very long chain fatty acid elongase 7 from Rattus norvegicus (Rat).